The following is a 257-amino-acid chain: Acetylglutamate kinase (257 aa).

Residues 41–42 (GG), Arg63, and Asn156 each bind substrate.

The protein belongs to the acetylglutamate kinase family. ArgB subfamily.

It is found in the cytoplasm. It catalyses the reaction N-acetyl-L-glutamate + ATP = N-acetyl-L-glutamyl 5-phosphate + ADP. It functions in the pathway amino-acid biosynthesis; L-arginine biosynthesis; N(2)-acetyl-L-ornithine from L-glutamate: step 2/4. Functionally, catalyzes the ATP-dependent phosphorylation of N-acetyl-L-glutamate. In Geobacillus sp. (strain WCH70), this protein is Acetylglutamate kinase.